We begin with the raw amino-acid sequence, 276 residues long: Probable endonuclease 4 (276 aa).

Zn(2+) contacts are provided by H70, H108, E143, D176, H179, H210, D223, H225, and E255.

It belongs to the AP endonuclease 2 family. Requires Zn(2+) as cofactor.

It carries out the reaction Endonucleolytic cleavage to 5'-phosphooligonucleotide end-products.. In terms of biological role, endonuclease IV plays a role in DNA repair. It cleaves phosphodiester bonds at apurinic or apyrimidinic (AP) sites, generating a 3'-hydroxyl group and a 5'-terminal sugar phosphate. This Mesomycoplasma hyopneumoniae (strain J / ATCC 25934 / NCTC 10110) (Mycoplasma hyopneumoniae) protein is Probable endonuclease 4.